The sequence spans 403 residues: Spindle assembly abnormal protein 5 (403 aa).

Disordered regions lie at residues 24–79 (PRVF…AHPA) and 96–127 (TVEG…ENWR). Basic and acidic residues predominate over residues 116-127 (RMTEENQEENWR). A coiled-coil region spans residues 128–163 (DVMKNEFEVMRKEMQEEATKKQEELNAQNLNKMQEM). Disordered regions lie at residues 174–205 (AKPS…ANKI), 255–276 (AYSP…SSGN), 302–325 (RQWT…PDPQ), and 355–403 (YHVE…SRRK). Basic and acidic residues predominate over residues 177 to 194 (SAEESQDREKENWYEQSR). Positions 305-321 (TSERNDNRTHDNYRPYE) are enriched in basic and acidic residues. Acidic residues predominate over residues 360-369 (VPEYEEEETE). Over residues 379 to 403 (YHEPMETESAAERERRIREKYSRRK) the composition is skewed to basic and acidic residues.

As to quaternary structure, interacts with sas-6 via its coiled coil domain.

The protein localises to the cytoplasm. Its subcellular location is the cytoskeleton. It is found in the microtubule organizing center. The protein resides in the centrosome. It localises to the centriole. In terms of biological role, required for centrosome duplication. Essential for daughter-centriole formation. Requires both maternal and partenal expression, suggesting that it regulates centriole duplication during both spermatogenesis and early embryogenesis. This is Spindle assembly abnormal protein 5 (sas-5) from Caenorhabditis briggsae.